The following is a 277-amino-acid chain: Shikimate dehydrogenase (NADP(+)) (277 aa).

Shikimate is bound by residues 20 to 22 (SLS) and Thr67. Lys71 serves as the catalytic Proton acceptor. Residue Asp83 coordinates NADP(+). Shikimate-binding residues include Asn92 and Asp107. NADP(+) is bound by residues 131–135 (GAGGV) and Ile219. Tyr221 lines the shikimate pocket. Gly242 provides a ligand contact to NADP(+).

Belongs to the shikimate dehydrogenase family. In terms of assembly, homodimer.

It carries out the reaction shikimate + NADP(+) = 3-dehydroshikimate + NADPH + H(+). It participates in metabolic intermediate biosynthesis; chorismate biosynthesis; chorismate from D-erythrose 4-phosphate and phosphoenolpyruvate: step 4/7. Involved in the biosynthesis of the chorismate, which leads to the biosynthesis of aromatic amino acids. Catalyzes the reversible NADPH linked reduction of 3-dehydroshikimate (DHSA) to yield shikimate (SA). In Pelobacter propionicus (strain DSM 2379 / NBRC 103807 / OttBd1), this protein is Shikimate dehydrogenase (NADP(+)).